The following is a 223-amino-acid chain: Cytidylate kinase (223 aa).

Gly12 to Thr20 serves as a coordination point for ATP.

This sequence belongs to the cytidylate kinase family. Type 1 subfamily.

It is found in the cytoplasm. The catalysed reaction is CMP + ATP = CDP + ADP. It carries out the reaction dCMP + ATP = dCDP + ADP. This Onion yellows phytoplasma (strain OY-M) protein is Cytidylate kinase.